We begin with the raw amino-acid sequence, 317 residues long: Ribosomal protein L11 methyltransferase (317 aa).

4 residues coordinate S-adenosyl-L-methionine: Thr-158, Gly-179, Asp-201, and Asn-244.

The protein belongs to the methyltransferase superfamily. PrmA family.

The protein localises to the cytoplasm. It carries out the reaction L-lysyl-[protein] + 3 S-adenosyl-L-methionine = N(6),N(6),N(6)-trimethyl-L-lysyl-[protein] + 3 S-adenosyl-L-homocysteine + 3 H(+). Functionally, methylates ribosomal protein L11. The sequence is that of Ribosomal protein L11 methyltransferase from Streptococcus equi subsp. equi (strain 4047).